A 993-amino-acid polypeptide reads, in one-letter code: Isoleucine--tRNA ligase (993 aa).

Residues 64–74 (PYANGNIHIGH) carry the 'HIGH' region motif. Glu621 is an L-isoleucyl-5'-AMP binding site. Positions 662–666 (KMSKS) match the 'KMSKS' region motif. Lys665 contributes to the ATP binding site.

The protein belongs to the class-I aminoacyl-tRNA synthetase family. IleS type 1 subfamily. Monomer.

It is found in the cytoplasm. The catalysed reaction is tRNA(Ile) + L-isoleucine + ATP = L-isoleucyl-tRNA(Ile) + AMP + diphosphate. Catalyzes the attachment of isoleucine to tRNA(Ile). As IleRS can inadvertently accommodate and process structurally similar amino acids such as valine, to avoid such errors it has two additional distinct tRNA(Ile)-dependent editing activities. One activity is designated as 'pretransfer' editing and involves the hydrolysis of activated Val-AMP. The other activity is designated 'posttransfer' editing and involves deacylation of mischarged Val-tRNA(Ile). The polypeptide is Isoleucine--tRNA ligase (Mesorhizobium japonicum (strain LMG 29417 / CECT 9101 / MAFF 303099) (Mesorhizobium loti (strain MAFF 303099))).